The sequence spans 195 residues: MNIHAVVIVLSYLIGSIPFGLILSYIGGLGDIRKVGSGNIGATNVFRKSKKLAVMTLLLDAVKGLISVLLAKIYSTDQTFAFISAMFSIIGHMFPVWLLFKGGKGISTLLGSMVLIEYKFVICFLFIWITLFAIFKYSSLSSIVSTIFVALLVYMYYTMNDTAVFIAMSLLIITQHADNIARMLSGKENKLNIGL.

5 helical membrane passes run 3–23, 53–73, 80–100, 115–135, and 147–167; these read IHAV…GLIL, AVMT…LAKI, FAFI…WLLF, LIEY…FAIF, and IFVA…VFIA.

Belongs to the PlsY family. As to quaternary structure, probably interacts with PlsX.

The protein localises to the cell inner membrane. It catalyses the reaction an acyl phosphate + sn-glycerol 3-phosphate = a 1-acyl-sn-glycero-3-phosphate + phosphate. It functions in the pathway lipid metabolism; phospholipid metabolism. Catalyzes the transfer of an acyl group from acyl-phosphate (acyl-PO(4)) to glycerol-3-phosphate (G3P) to form lysophosphatidic acid (LPA). This enzyme utilizes acyl-phosphate as fatty acyl donor, but not acyl-CoA or acyl-ACP. This chain is Glycerol-3-phosphate acyltransferase, found in Ehrlichia chaffeensis (strain ATCC CRL-10679 / Arkansas).